The chain runs to 462 residues: Siroheme synthase (462 aa).

The segment at 1-203 (MQYFPIFVDT…GNNSKAEQMM (203 aa)) is precorrin-2 dehydrogenase /sirohydrochlorin ferrochelatase. NAD(+) contacts are provided by residues 22–23 (EV) and 43–44 (PW). Serine 128 bears the Phosphoserine mark. Residues 217-462 (GEVYLVGAGP…EKLNWFGADA (246 aa)) are uroporphyrinogen-III C-methyltransferase. Position 226 (proline 226) interacts with S-adenosyl-L-methionine. Aspartate 249 (proton acceptor) is an active-site residue. Lysine 271 serves as the catalytic Proton donor. S-adenosyl-L-methionine is bound by residues 302-304 (GGD), isoleucine 307, 332-333 (TA), methionine 384, and alanine 413.

It in the N-terminal section; belongs to the precorrin-2 dehydrogenase / sirohydrochlorin ferrochelatase family. In the C-terminal section; belongs to the precorrin methyltransferase family.

It carries out the reaction uroporphyrinogen III + 2 S-adenosyl-L-methionine = precorrin-2 + 2 S-adenosyl-L-homocysteine + H(+). The catalysed reaction is precorrin-2 + NAD(+) = sirohydrochlorin + NADH + 2 H(+). It catalyses the reaction siroheme + 2 H(+) = sirohydrochlorin + Fe(2+). The protein operates within cofactor biosynthesis; adenosylcobalamin biosynthesis; precorrin-2 from uroporphyrinogen III: step 1/1. It participates in cofactor biosynthesis; adenosylcobalamin biosynthesis; sirohydrochlorin from precorrin-2: step 1/1. Its pathway is porphyrin-containing compound metabolism; siroheme biosynthesis; precorrin-2 from uroporphyrinogen III: step 1/1. It functions in the pathway porphyrin-containing compound metabolism; siroheme biosynthesis; siroheme from sirohydrochlorin: step 1/1. The protein operates within porphyrin-containing compound metabolism; siroheme biosynthesis; sirohydrochlorin from precorrin-2: step 1/1. Multifunctional enzyme that catalyzes the SAM-dependent methylations of uroporphyrinogen III at position C-2 and C-7 to form precorrin-2 via precorrin-1. Then it catalyzes the NAD-dependent ring dehydrogenation of precorrin-2 to yield sirohydrochlorin. Finally, it catalyzes the ferrochelation of sirohydrochlorin to yield siroheme. The protein is Siroheme synthase of Pseudoalteromonas atlantica (strain T6c / ATCC BAA-1087).